The chain runs to 351 residues: Protein FAM118B (351 aa).

Alanine 2 carries the post-translational modification N-acetylalanine. Serine 9 carries the phosphoserine modification.

It belongs to the FAM118 family.

The protein localises to the nucleus. The protein resides in the cajal body. Functionally, may play a role in Cajal bodies formation. This chain is Protein FAM118B (FAM118B), found in Homo sapiens (Human).